A 499-amino-acid polypeptide reads, in one-letter code: Lanosterol 14-alpha demethylase (499 aa).

A helical transmembrane segment spans residues 13-35 (SAVLQMSLTSVLLTASVFTLTLG). Residue Cys-441 coordinates heme.

This sequence belongs to the cytochrome P450 family. It depends on heme as a cofactor. In terms of tissue distribution, strongly expressed in intestine. Moderately expressed in liver, with higher levels in females compared to males. Also detected at low levels in brain, eye, kidney and testis.

It is found in the endoplasmic reticulum membrane. The protein resides in the membrane. It catalyses the reaction a 14alpha-methyl steroid + 3 reduced [NADPH--hemoprotein reductase] + 3 O2 = a Delta(14) steroid + formate + 3 oxidized [NADPH--hemoprotein reductase] + 4 H2O + 4 H(+). The catalysed reaction is lanosterol + 3 reduced [NADPH--hemoprotein reductase] + 3 O2 = 4,4-dimethyl-5alpha-cholesta-8,14,24-trien-3beta-ol + formate + 3 oxidized [NADPH--hemoprotein reductase] + 4 H2O + 4 H(+). The enzyme catalyses 24,25-dihydrolanosterol + 3 reduced [NADPH--hemoprotein reductase] + 3 O2 = 4,4-dimethyl-8,14-cholestadien-3beta-ol + formate + 3 oxidized [NADPH--hemoprotein reductase] + 4 H2O + 4 H(+). It carries out the reaction a 14alpha-methyl steroid + reduced [NADPH--hemoprotein reductase] + O2 = a 14alpha-hydroxymethyl steroid + oxidized [NADPH--hemoprotein reductase] + H2O + H(+). It catalyses the reaction a 14alpha-hydroxymethyl steroid + reduced [NADPH--hemoprotein reductase] + O2 = a 14alpha-formyl steroid + oxidized [NADPH--hemoprotein reductase] + 2 H2O + H(+). The catalysed reaction is a 14alpha-formyl steroid + reduced [NADPH--hemoprotein reductase] + O2 = a Delta(14) steroid + formate + oxidized [NADPH--hemoprotein reductase] + H2O + 2 H(+). The enzyme catalyses lanosterol + reduced [NADPH--hemoprotein reductase] + O2 = 32-hydroxylanosterol + oxidized [NADPH--hemoprotein reductase] + H2O + H(+). It carries out the reaction 32-hydroxylanosterol + reduced [NADPH--hemoprotein reductase] + O2 = 32-oxolanosterol + oxidized [NADPH--hemoprotein reductase] + 2 H2O + H(+). It catalyses the reaction 32-oxolanosterol + reduced [NADPH--hemoprotein reductase] + O2 = 4,4-dimethyl-5alpha-cholesta-8,14,24-trien-3beta-ol + formate + oxidized [NADPH--hemoprotein reductase] + H2O + 2 H(+). The catalysed reaction is 24,25-dihydrolanosterol + reduced [NADPH--hemoprotein reductase] + O2 = 32-hydroxy-24,25-dihydrolanosterol + oxidized [NADPH--hemoprotein reductase] + H2O + H(+). The enzyme catalyses 32-hydroxy-24,25-dihydrolanosterol + reduced [NADPH--hemoprotein reductase] + O2 = 32-oxo-24,25-dihydrolanosterol + oxidized [NADPH--hemoprotein reductase] + 2 H2O + H(+). It carries out the reaction 32-oxo-24,25-dihydrolanosterol + reduced [NADPH--hemoprotein reductase] + O2 = 4,4-dimethyl-8,14-cholestadien-3beta-ol + formate + oxidized [NADPH--hemoprotein reductase] + H2O + 2 H(+). Its pathway is steroid biosynthesis; zymosterol biosynthesis; zymosterol from lanosterol: step 1/6. With respect to regulation, inhibited by ketoconazole. May also be inhibited to a lesser extent by propiconazole. In terms of biological role, sterol 14alpha-demethylase that plays a critical role in the cholesterol biosynthesis pathway, being cholesterol the major sterol component in deuterostome membranes as well as a precursor for steroid hormone synthesis. Cytochrome P450 monooxygenase that catalyzes the three-step oxidative removal of the 14alpha-methyl group (C-32) of sterols such as lanosterol (lanosta-8,24-dien-3beta-ol) and 24,25-dihydrolanosterol (DHL) in the form of formate, and converts the sterols to 4,4-dimethyl-5alpha-cholesta-8,14,24-trien-3beta-ol and 4,4-dimethyl-8,14-cholestadien-3beta-ol, respectively, which are intermediates of cholesterol biosynthesis. Can also demethylate substrates not intrinsic to deuterostomes, such as eburicol (24-methylene-24,25-dihydrolanosterol), but at a lower rate than DHL. The chain is Lanosterol 14-alpha demethylase from Danio rerio (Zebrafish).